A 102-amino-acid polypeptide reads, in one-letter code: Small ribosomal subunit protein uS10 (102 aa).

It belongs to the universal ribosomal protein uS10 family. Part of the 30S ribosomal subunit.

Involved in the binding of tRNA to the ribosomes. The sequence is that of Small ribosomal subunit protein uS10 from Ligilactobacillus salivarius (strain UCC118) (Lactobacillus salivarius).